The following is a 593-amino-acid chain: UvrABC system protein C (593 aa).

Positions M17–I94 constitute a GIY-YIG domain. The UVR domain occupies K199–L234.

The protein belongs to the UvrC family. As to quaternary structure, interacts with UvrB in an incision complex.

The protein resides in the cytoplasm. Functionally, the UvrABC repair system catalyzes the recognition and processing of DNA lesions. UvrC both incises the 5' and 3' sides of the lesion. The N-terminal half is responsible for the 3' incision and the C-terminal half is responsible for the 5' incision. This is UvrABC system protein C from Staphylococcus aureus (strain bovine RF122 / ET3-1).